We begin with the raw amino-acid sequence, 427 residues long: Trigger factor (427 aa).

The 86-residue stretch at 163–248 folds into the PPIase FKBP-type domain; it reads GDTVVIDFEG…VHEVKAKELP (86 aa).

It belongs to the FKBP-type PPIase family. Tig subfamily.

The protein localises to the cytoplasm. The catalysed reaction is [protein]-peptidylproline (omega=180) = [protein]-peptidylproline (omega=0). Functionally, involved in protein export. Acts as a chaperone by maintaining the newly synthesized protein in an open conformation. Functions as a peptidyl-prolyl cis-trans isomerase. In Enterococcus faecalis (strain ATCC 700802 / V583), this protein is Trigger factor.